A 275-amino-acid polypeptide reads, in one-letter code: Polyamine aminopropyltransferase (275 aa).

Residues E2–K235 form the PABS domain. Q31 is an S-methyl-5'-thioadenosine binding site. Positions 62 and 86 each coordinate spermidine. S-methyl-5'-thioadenosine-binding positions include E106 and D137 to G138. D155 functions as the Proton acceptor in the catalytic mechanism. D155 to E158 is a binding site for spermidine. P162 provides a ligand contact to S-methyl-5'-thioadenosine.

The protein belongs to the spermidine/spermine synthase family. Homodimer or homotetramer.

It localises to the cytoplasm. The enzyme catalyses S-adenosyl 3-(methylsulfanyl)propylamine + putrescine = S-methyl-5'-thioadenosine + spermidine + H(+). The protein operates within amine and polyamine biosynthesis; spermidine biosynthesis; spermidine from putrescine: step 1/1. Catalyzes the irreversible transfer of a propylamine group from the amino donor S-adenosylmethioninamine (decarboxy-AdoMet) to putrescine (1,4-diaminobutane) to yield spermidine. The sequence is that of Polyamine aminopropyltransferase from Bacillus mycoides (strain KBAB4) (Bacillus weihenstephanensis).